A 49-amino-acid polypeptide reads, in one-letter code: Photosystem II reaction center protein K (49 aa).

A propeptide spanning residues 1–12 (MISSIHLRKLLG) is cleaved from the precursor. The chain crosses the membrane as a helical span at residues 24–44 (IIDVLPIIPVLFLLLAFVWQA).

This sequence belongs to the PsbK family. In terms of assembly, PSII is composed of 1 copy each of membrane proteins PsbA, PsbB, PsbC, PsbD, PsbE, PsbF, PsbH, PsbI, PsbJ, PsbK, PsbL, PsbM, PsbT, PsbX, PsbY, PsbZ, Psb30/Ycf12, at least 3 peripheral proteins of the oxygen-evolving complex and a large number of cofactors. It forms dimeric complexes.

The protein localises to the plastid. It is found in the chloroplast thylakoid membrane. In terms of biological role, one of the components of the core complex of photosystem II (PSII). PSII is a light-driven water:plastoquinone oxidoreductase that uses light energy to abstract electrons from H(2)O, generating O(2) and a proton gradient subsequently used for ATP formation. It consists of a core antenna complex that captures photons, and an electron transfer chain that converts photonic excitation into a charge separation. The chain is Photosystem II reaction center protein K from Phacus acuminatus.